Consider the following 95-residue polypeptide: Ferredoxin-4 (95 aa).

The 2Fe-2S ferredoxin-type domain occupies 2 to 95 (DKATLTFTDV…LGGAVKVRPA (94 aa)). Cys38, Cys43, Cys46, and Cys81 together coordinate [2Fe-2S] cluster.

This sequence belongs to the 2Fe2S plant-type ferredoxin family. [2Fe-2S] cluster is required as a cofactor.

Ferredoxins are iron-sulfur proteins that transfer electrons in a wide variety of metabolic reactions. This ferredoxin is required for nitrogen fixation. This chain is Ferredoxin-4 (fdxC), found in Rhodobacter capsulatus (Rhodopseudomonas capsulata).